Here is a 929-residue protein sequence, read N- to C-terminus: Synaptopodin (929 aa).

Met1 is subject to N-acetylmethionine. Over residues 1 to 12 (MLGPHLPPPPLA) the composition is skewed to pro residues. Positions 1-260 (MLGPHLPPPP…EASLLRHLEK (260 aa)) are disordered. 2 stretches are compositionally biased toward basic and acidic residues: residues 60 to 69 (GVSRSGDDSA) and 91 to 110 (SREEQGASQHDDRASQDWDV). Ser140 carries the post-translational modification Phosphoserine. The segment covering 142–151 (TEKDLKEAKA) has biased composition (basic and acidic residues). Over residues 152-170 (RSQQIAAQLTTPPSSNSRG) the composition is skewed to polar residues. Ser207 bears the Phosphoserine mark. The segment covering 224-234 (EPGPPRHPSPQ) has biased composition (pro residues). The residue at position 263 (Ser263) is a Phosphoserine. Residues 285–389 (GLHLSQNREA…TLCADGQPQA (105 aa)) are disordered. Low complexity predominate over residues 317 to 332 (LASPSATLTTPTSNSS). Residue Asn330 is glycosylated (N-linked (GlcNAc...) asparagine). A compositionally biased stretch (polar residues) spans 333–379 (HNPPATDVNQNPPATVVPQSLPLSSIQQNSSEAQLPSNGTGPASKPS). Phosphoserine occurs at positions 501 and 525. Positions 509–558 (FGEKAPAPQPPSLPDRSPRPQRHIMSRSPMVERRMMGQRSPASERRPLGN) are disordered. Thr560 carries the phosphothreonine modification. A PPxY motif motif is present at residues 562–565 (PPTY). Residue Ser580 is modified to Phosphoserine. The PPxY motif motif lies at 581 to 584 (PPSY). Disordered stretches follow at residues 589 to 610 (PSSDPKSSHLKGQAVPASKTGI) and 630 to 726 (KPKV…KGAE). Over residues 646–656 (ADEKRRQRDQG) the composition is skewed to basic and acidic residues. Residues Ser685, Ser702, and Tyr738 each carry the phosphoserine modification. A compositionally biased stretch (low complexity) spans 685-698 (SPAAAEEVVPEWAS). Residues 740-763 (IESSSHTPELARCPSPTMSLPSSW) form a disordered region. Phosphothreonine is present on Thr746. Phosphoserine occurs at positions 754, 758, and 779. Thr783 is subject to Phosphothreonine. Phosphoserine is present on residues Pro784, Thr804, Arg812, Lys826, Ser833, Ser854, Pro871, and Pro894. The segment covering 826–839 (KVSPRAASPAKPSS) has biased composition (low complexity). The interval 826–916 (KVSPRAASPA…RPSFSTRNAG (91 aa)) is disordered. Positions 866 to 880 (GLYTSPGQDSLQPTA) are enriched in polar residues.

This sequence belongs to the synaptopodin family. In terms of assembly, interacts with BAIAP1. Interacts with actin. Interacts (via PPxY motifs) with WWC1 (via WW domains). O-glycosylated. As to expression, expressed in cerebral cortex.

It is found in the cytoplasm. It localises to the cytoskeleton. The protein resides in the cell junction. Its subcellular location is the tight junction. The protein localises to the perikaryon. It is found in the cell projection. It localises to the dendritic spine. The protein resides in the postsynaptic density. Its subcellular location is the synapse. The protein localises to the cytosol. Actin-associated protein that may play a role in modulating actin-based shape and motility of dendritic spines and renal podocyte foot processes. Seems to be essential for the formation of spine apparatuses in spines of telencephalic neurons, which is involved in synaptic plasticity. In Homo sapiens (Human), this protein is Synaptopodin (SYNPO).